The following is a 380-amino-acid chain: Cytochrome b (380 aa).

A run of 4 helical transmembrane segments spans residues 33-53 (FGSL…FLAM), 77-98 (WLIR…YFHI), 113-133 (WNIG…GYVL), and 178-198 (FFAF…LHLL). Heme b contacts are provided by histidine 83 and histidine 97. Heme b is bound by residues histidine 182 and histidine 196. Residue histidine 201 coordinates a ubiquinone. The next 4 membrane-spanning stretches (helical) occupy residues 226–246 (YKDL…ALFS), 288–308 (LGGV…PFLH), 320–340 (VSQF…WIGG), and 347–367 (FIII…VFFP).

It belongs to the cytochrome b family. As to quaternary structure, the cytochrome bc1 complex contains 3 respiratory subunits (MT-CYB, CYC1 and UQCRFS1), 2 core proteins (UQCRC1 and UQCRC2) and probably 6 low-molecular weight proteins. Heme b serves as cofactor.

It is found in the mitochondrion inner membrane. Its function is as follows. Component of the ubiquinol-cytochrome c reductase complex (complex III or cytochrome b-c1 complex) that is part of the mitochondrial respiratory chain. The b-c1 complex mediates electron transfer from ubiquinol to cytochrome c. Contributes to the generation of a proton gradient across the mitochondrial membrane that is then used for ATP synthesis. The sequence is that of Cytochrome b (mt-cyb) from Sarda sarda (Atlantic bonito).